Reading from the N-terminus, the 66-residue chain is Defensin-like peptide 2/4 (66 aa).

Positions 1 to 22 (MRLAYLLLLLVAVLFQAGGGSA) are cleaved as a signal peptide. Positions 23-24 (KP) are excised as a propeptide. Met-26 is modified (D-methionine; in form DLP-2). 3 disulfides stabilise this stretch: Cys-33–Cys-63, Cys-40–Cys-56, and Cys-48–Cys-64.

Stereoinversion of L-Met-26 (in DLP-4) to D-Met-26 (in DLP-2). As to expression, produced by the crural gland and detected in venom from the spur located on each male hind leg. Is also widely expressed in both male and female tissues, including brain, intestine, kidney, lung, spleen and testis.

Its subcellular location is the secreted. Its function is as follows. Does not show antimicrobial, myotoxic, hemolytic and cell-promoting activities. The polypeptide is Defensin-like peptide 2/4 (Ornithorhynchus anatinus (Duckbill platypus)).